The following is a 572-amino-acid chain: Proline--tRNA ligase (572 aa).

The protein belongs to the class-II aminoacyl-tRNA synthetase family. ProS type 1 subfamily. As to quaternary structure, homodimer.

It localises to the cytoplasm. It catalyses the reaction tRNA(Pro) + L-proline + ATP = L-prolyl-tRNA(Pro) + AMP + diphosphate. In terms of biological role, catalyzes the attachment of proline to tRNA(Pro) in a two-step reaction: proline is first activated by ATP to form Pro-AMP and then transferred to the acceptor end of tRNA(Pro). As ProRS can inadvertently accommodate and process non-cognate amino acids such as alanine and cysteine, to avoid such errors it has two additional distinct editing activities against alanine. One activity is designated as 'pretransfer' editing and involves the tRNA(Pro)-independent hydrolysis of activated Ala-AMP. The other activity is designated 'posttransfer' editing and involves deacylation of mischarged Ala-tRNA(Pro). The misacylated Cys-tRNA(Pro) is not edited by ProRS. This is Proline--tRNA ligase from Cronobacter sakazakii (strain ATCC BAA-894) (Enterobacter sakazakii).